We begin with the raw amino-acid sequence, 73 residues long: Salivary protein FS48 (73 aa).

The first 21 residues, 1–21, serve as a signal peptide directing secretion; it reads MKFAFAIFVVLAILHTELISA.

The protein resides in the secreted. In terms of biological role, salivary protein that inhibits host voltage-gated potassium channels Kv1.1/KCNA1, Kv1.2/KCNA2 and Kv1.3/KCNA3 likely via a voltage-independent pore-blocking mechanism. Suppresses expression of the Kv1.3/KCNA3 channel in lipopolysaccharide (LPS)-stimulated mouse macrophages and human T-cells. Down-regulates secretion of nitric oxide (NO) and inflammatory cytokines, such as TNF-alpha/TNF, IL-1beta/IL1B and IL6, in LPS-stimulated mouse macrophages in a manner dependent on Kv1.3/KCNA3 channel blockage. Reduces activation of MAPK and NF-kappa-B signaling pathways in LPS-stimulated mouse macrophages. Modulates intracellular Ca(2+) signaling in human PMA/ionomycin-triggered T-cells. Interferes with the activation of the MAPK, NF-kappa-B and NFATc1 pathways in human PMA/ionomycin-triggered T-cells. Reduces proliferation of human PMA/ionomycin-triggered T-cells. Down-regulates secretion of cytokines, such as TNF-alpha/TNF and IL2, in human PMA/ionomycin-triggered T-cells. This chain is Salivary protein FS48, found in Xenopsylla cheopis (Oriental rat flea).